The sequence spans 1241 residues: Dinoflagellate luciferase (1241 aa).

Luciferase stretches follow at residues 114-465 (KTGL…IKRD), 491-842 (DQGF…TKRD), and 868-1218 (EKGF…KKRD).

Belongs to the calycin superfamily. Luciferase family.

Its subcellular location is the cytoplasmic vesicle. It carries out the reaction dinoflagellate luciferin + O2 = oxidized dinoflagellate luciferin + hnu + H2O + H(+). With respect to regulation, regulated by pH: upon acidification, at a pH of 6.3, dinoflagellate luciferin is released from luciferin-binding protein LBP, allowing the interaction between Dinoflagellate luciferase and its substrate luciferin. Emits blue light flashes with a wavelength of 475 nm during the night phase. The chain is Dinoflagellate luciferase from Lingulodinium polyedra (Dinoflagellate).